The chain runs to 969 residues: Squamosa promoter-binding-like protein 6 (969 aa).

Disordered stretches follow at residues 1-25 and 54-81; these read MEAA…DMDR and EASG…VNAR. A compositionally biased stretch (low complexity) spans 55-74; the sequence is ASGLALNSSPSSSEEAGAAS. The SBP-type zinc-finger motif lies at 149–226; sequence GPACQVEGCT…AGHNRRRRKT (78 aa). Residues C152, C157, C174, H177, C193, C196, H200, and C212 each coordinate Zn(2+). The Bipartite nuclear localization signal motif lies at 209 to 225; that stretch reads KRSCRRRLAGHNRRRRK. Residues 377–434 form a disordered region; the sequence is GMEGFEDGYEGSPTPAFKTTDSPNCPSWMHQDSTQSPPQTSGNSDSTSAQSLSSSNGD. Positions 393-419 are enriched in polar residues; that stretch reads FKTTDSPNCPSWMHQDSTQSPPQTSGN. The span at 420 to 431 shows a compositional bias: low complexity; it reads SDSTSAQSLSSS.

Ubiquitous.

Its subcellular location is the nucleus. Functionally, trans-acting factor that binds specifically to the consensus nucleotide sequence 5'-TNCGTACAA-3'. The chain is Squamosa promoter-binding-like protein 6 (SPL6) from Oryza sativa subsp. japonica (Rice).